Reading from the N-terminus, the 195-residue chain is C2 domain-containing protein DDB_G0290753 (195 aa).

One can recognise a C2 domain in the interval 38–161 (KKLTKETKFE…NIKKYSYTFK (124 aa)). Residues Asp72, Asp78, Asp131, Asp133, and Asp139 each contribute to the Ca(2+) site.

Ca(2+) is required as a cofactor.

The protein is C2 domain-containing protein DDB_G0290753 of Dictyostelium discoideum (Social amoeba).